The following is a 203-amino-acid chain: Holliday junction branch migration complex subunit RuvA (203 aa).

Residues 1–63 (MIGKLSGKID…EEHIHLYGFL (63 aa)) form a domain I region. The segment at 64–142 (TIEEKNFFNL…KISTGAAIIN (79 aa)) is domain II. The flexible linker stretch occupies residues 143–149 (DSLNIKN). A domain III region spans residues 150–203 (ITSVASNEVIKALVNLGFSRFEAQNSVQGIVIQNPEISIDELIKTALKNRNAGL).

Belongs to the RuvA family. Homotetramer. Forms an RuvA(8)-RuvB(12)-Holliday junction (HJ) complex. HJ DNA is sandwiched between 2 RuvA tetramers; dsDNA enters through RuvA and exits via RuvB. An RuvB hexamer assembles on each DNA strand where it exits the tetramer. Each RuvB hexamer is contacted by two RuvA subunits (via domain III) on 2 adjacent RuvB subunits; this complex drives branch migration. In the full resolvosome a probable DNA-RuvA(4)-RuvB(12)-RuvC(2) complex forms which resolves the HJ.

It is found in the cytoplasm. In terms of biological role, the RuvA-RuvB-RuvC complex processes Holliday junction (HJ) DNA during genetic recombination and DNA repair, while the RuvA-RuvB complex plays an important role in the rescue of blocked DNA replication forks via replication fork reversal (RFR). RuvA specifically binds to HJ cruciform DNA, conferring on it an open structure. The RuvB hexamer acts as an ATP-dependent pump, pulling dsDNA into and through the RuvAB complex. HJ branch migration allows RuvC to scan DNA until it finds its consensus sequence, where it cleaves and resolves the cruciform DNA. The chain is Holliday junction branch migration complex subunit RuvA from Rickettsia akari (strain Hartford).